A 323-amino-acid polypeptide reads, in one-letter code: Protein REDOX 2 (323 aa).

Asp53 contacts NADP(+). The Proton donor role is filled by Tyr58. Residue His121 participates in substrate binding. NADP(+) is bound by residues 167-168 (SN), Gln189, 215-220 (WSPLLS), and 289-297 (DQIHEIPQR). Residues 302-323 (GEEFMHPEGPIKSPEELWDGDL) form a disordered region.

This sequence belongs to the aldo/keto reductase family. As to quaternary structure, monomer. As to expression, expressed in leaf epidermis.

The catalysed reaction is 15alpha-stemmadenine + NADP(+) = 17-dehydrostemmadenine + NADPH + 2 H(+). Its pathway is alkaloid biosynthesis. In terms of biological role, component of iboga and aspidosperma monoterpenoid indole alkaloids (MIAs, e.g. tabersonine and catharanthine) biosynthesis pathway from 19E-geissoschizine. Catalyzes the second oxidation step of the unstable intermediate product resulting from the reaction triggered by the geissoschizine oxidase (GO) in the stemmadenine biosynthesis process from 19E-geissoschizine. The protein is Protein REDOX 2 of Catharanthus roseus (Madagascar periwinkle).